The following is a 387-amino-acid chain: 8-amino-7-oxononanoate synthase (387 aa).

Arg-19 is a binding site for substrate. 106–107 (GY) provides a ligand contact to pyridoxal 5'-phosphate. His-131 is a substrate binding site. Positions 177, 205, and 236 each coordinate pyridoxal 5'-phosphate. At Lys-239 the chain carries N6-(pyridoxal phosphate)lysine. Thr-353 lines the substrate pocket.

It belongs to the class-II pyridoxal-phosphate-dependent aminotransferase family. BioF subfamily. Homodimer. Requires pyridoxal 5'-phosphate as cofactor.

The catalysed reaction is 6-carboxyhexanoyl-[ACP] + L-alanine + H(+) = (8S)-8-amino-7-oxononanoate + holo-[ACP] + CO2. It participates in cofactor biosynthesis; biotin biosynthesis. Its function is as follows. Catalyzes the decarboxylative condensation of pimeloyl-[acyl-carrier protein] and L-alanine to produce 8-amino-7-oxononanoate (AON), [acyl-carrier protein], and carbon dioxide. In Nitrosomonas eutropha (strain DSM 101675 / C91 / Nm57), this protein is 8-amino-7-oxononanoate synthase.